Reading from the N-terminus, the 207-residue chain is N-(5'-phosphoribosyl)anthranilate isomerase (207 aa).

This sequence belongs to the TrpF family.

It catalyses the reaction N-(5-phospho-beta-D-ribosyl)anthranilate = 1-(2-carboxyphenylamino)-1-deoxy-D-ribulose 5-phosphate. The protein operates within amino-acid biosynthesis; L-tryptophan biosynthesis; L-tryptophan from chorismate: step 3/5. The protein is N-(5'-phosphoribosyl)anthranilate isomerase of Staphylococcus epidermidis (strain ATCC 35984 / DSM 28319 / BCRC 17069 / CCUG 31568 / BM 3577 / RP62A).